Reading from the N-terminus, the 383-residue chain is TOM1-like protein 2 (383 aa).

The VHS domain occupies 45-178 (ATLETLEEPN…GLHARGEENS (134 aa)). The region spanning 223 to 310 (LSIKDKKEQI…VLSSYKKPDE (88 aa)) is the GAT domain. Residues 305–383 (YKKPDETEKK…LGLSSDEDEK (79 aa)) are disordered. Composition is skewed to basic and acidic residues over residues 306 to 316 (KKPDETEKKAS) and 339 to 354 (EPVKKTGADDDKKHSE). S377 and S378 each carry phosphoserine.

It belongs to the TOM1 family. In terms of tissue distribution, ubiquitously expressed.

The protein resides in the cytoplasm. It localises to the membrane. In terms of biological role, binds ubiquitin in vitro. Might contribute to the loading of the ESCRT machinery. The protein is TOM1-like protein 2 of Arabidopsis thaliana (Mouse-ear cress).